The primary structure comprises 363 residues: MEIQNTKSTQILYTDISTKQTQSSSETQKSQNYQQIAAHIPLNVGKNPVLTTTLNDDQLLKLSEQVQHDSEIIARLTDKKMKDLSEMSHTLTPENTLDISSLSSNAVSLIISVAVLLSALRTAETKLGSQLSLIAFDATKSAAENIVRQGLAALSSSITGAVTQVGITGIGAKKTHSGISDQKGALRKNLATAQSLEKELAGSKLGLNKQIDTNITSPQTNSSTKFLGKNKLAPDNISLSTEHKTSLSSPDISLQDKIDTQRRTYELNTLSAQQKQNIGRATMETSAVAGNISTSGGRYASALEEEEQLISQASSKQAEEASQVSKEASQATNQLIQKLLNIIDNINQSRSSTASQIAGNIRA.

A helical transmembrane segment spans residues 99-120; it reads ISSLSSNAVSLIISVAVLLSAL.

This sequence belongs to the SctB/SipC family. As to quaternary structure, the core secretion machinery of the T3SS is composed of approximately 20 different proteins, including cytoplasmic components, a base, an export apparatus and a needle. This subunit is involved in the formation of a pore, called the translocon, in host membrane.

The protein localises to the secreted. It is found in the host membrane. Component of the type III secretion system (T3SS), also called injectisome, which is used to inject bacterial effector proteins into eukaryotic host cells. IpaB/SctE and IpaC/SctB are inserted into the host membrane where they form a pore and allow the translocation of effector proteins into the cytosol of target cells. This chain is Type 3 secretion system translocon protein SctB, found in Shigella dysenteriae.